Here is a 307-residue protein sequence, read N- to C-terminus: Ribonuclease Z (307 aa).

Positions 63, 65, 67, 68, 140, 211, and 269 each coordinate Zn(2+). Asp-67 functions as the Proton acceptor in the catalytic mechanism.

Belongs to the RNase Z family. Homodimer. Zn(2+) is required as a cofactor.

The catalysed reaction is Endonucleolytic cleavage of RNA, removing extra 3' nucleotides from tRNA precursor, generating 3' termini of tRNAs. A 3'-hydroxy group is left at the tRNA terminus and a 5'-phosphoryl group is left at the trailer molecule.. In terms of biological role, zinc phosphodiesterase, which displays some tRNA 3'-processing endonuclease activity. Probably involved in tRNA maturation, by removing a 3'-trailer from precursor tRNA. In Bacillus subtilis (strain 168), this protein is Ribonuclease Z.